Here is a 601-residue protein sequence, read N- to C-terminus: Proline--tRNA ligase (601 aa).

This sequence belongs to the class-II aminoacyl-tRNA synthetase family. ProS type 1 subfamily. Homodimer.

Its subcellular location is the cytoplasm. It catalyses the reaction tRNA(Pro) + L-proline + ATP = L-prolyl-tRNA(Pro) + AMP + diphosphate. Functionally, catalyzes the attachment of proline to tRNA(Pro) in a two-step reaction: proline is first activated by ATP to form Pro-AMP and then transferred to the acceptor end of tRNA(Pro). As ProRS can inadvertently accommodate and process non-cognate amino acids such as alanine and cysteine, to avoid such errors it has two additional distinct editing activities against alanine. One activity is designated as 'pretransfer' editing and involves the tRNA(Pro)-independent hydrolysis of activated Ala-AMP. The other activity is designated 'posttransfer' editing and involves deacylation of mischarged Ala-tRNA(Pro). The misacylated Cys-tRNA(Pro) is not edited by ProRS. In Tropheryma whipplei (strain TW08/27) (Whipple's bacillus), this protein is Proline--tRNA ligase.